Reading from the N-terminus, the 203-residue chain is NADH-quinone oxidoreductase subunit C (203 aa).

It belongs to the complex I 30 kDa subunit family. As to quaternary structure, NDH-1 is composed of 14 different subunits. Subunits NuoB, C, D, E, F, and G constitute the peripheral sector of the complex.

It is found in the cell inner membrane. It catalyses the reaction a quinone + NADH + 5 H(+)(in) = a quinol + NAD(+) + 4 H(+)(out). In terms of biological role, NDH-1 shuttles electrons from NADH, via FMN and iron-sulfur (Fe-S) centers, to quinones in the respiratory chain. The immediate electron acceptor for the enzyme in this species is believed to be ubiquinone. Couples the redox reaction to proton translocation (for every two electrons transferred, four hydrogen ions are translocated across the cytoplasmic membrane), and thus conserves the redox energy in a proton gradient. The sequence is that of NADH-quinone oxidoreductase subunit C from Methylibium petroleiphilum (strain ATCC BAA-1232 / LMG 22953 / PM1).